The sequence spans 244 residues: Phosphoadenosine 5'-phosphosulfate reductase (244 aa).

C239 acts as the Nucleophile; cysteine thiosulfonate intermediate in catalysis.

The protein belongs to the PAPS reductase family. CysH subfamily.

Its subcellular location is the cytoplasm. It catalyses the reaction [thioredoxin]-disulfide + sulfite + adenosine 3',5'-bisphosphate + 2 H(+) = [thioredoxin]-dithiol + 3'-phosphoadenylyl sulfate. The protein operates within sulfur metabolism; hydrogen sulfide biosynthesis; sulfite from sulfate: step 3/3. Catalyzes the formation of sulfite from phosphoadenosine 5'-phosphosulfate (PAPS) using thioredoxin as an electron donor. In Escherichia coli O6:K15:H31 (strain 536 / UPEC), this protein is Phosphoadenosine 5'-phosphosulfate reductase.